Here is a 217-residue protein sequence, read N- to C-terminus: ATP-dependent Clp protease proteolytic subunit (217 aa).

The active-site Nucleophile is serine 121. Histidine 146 is a catalytic residue.

This sequence belongs to the peptidase S14 family. Fourteen ClpP subunits assemble into 2 heptameric rings which stack back to back to give a disk-like structure with a central cavity, resembling the structure of eukaryotic proteasomes.

The protein resides in the cytoplasm. It carries out the reaction Hydrolysis of proteins to small peptides in the presence of ATP and magnesium. alpha-casein is the usual test substrate. In the absence of ATP, only oligopeptides shorter than five residues are hydrolyzed (such as succinyl-Leu-Tyr-|-NHMec, and Leu-Tyr-Leu-|-Tyr-Trp, in which cleavage of the -Tyr-|-Leu- and -Tyr-|-Trp bonds also occurs).. Functionally, cleaves peptides in various proteins in a process that requires ATP hydrolysis. Has a chymotrypsin-like activity. Plays a major role in the degradation of misfolded proteins. The protein is ATP-dependent Clp protease proteolytic subunit of Burkholderia mallei (strain NCTC 10247).